The chain runs to 1135 residues: MGIWKWLVMASLVWPVLTLRNVYDMKIECPHTVSFGENSVIGYVELPPVPLADTAQMVPESSCNMDNHQSLNTITKYTQVSWRGKADQSQSSQNSFETVSTEVDLKGTCVLKHKMVEESYRSRKSVTCYDLSCNSTYCKPTLYMIVPIHACNMMKSCLIALGPYRVQVVYERSYCMTGVLIEGKCFVPDQSVVSIIKHGIFDIASVHIVCFFVAVKGNTYKIFEQVKKSFESTCNDTENKVQGYYICIVGGNSAPIYVPTLDDFRSMEAFTGIFRSPHGEDHDLAGEEIASYSIVGPANAKVPHSASSDTLSLIAYSGIPSYSSLSILTSSTEAKHVFSPGLFPKLNHTNCDKSAIPLIWTGMIDLPGYYEAVHPCTVFCVLSGPGASCEAFSEGGIFNITSPMCLVSKQNRFRLTEQQVNFVCQRVDMDIVVYCNGQRKVILTKTLVIGQCIYTITSLFSLLPGVAHSIAVELCVPGFHGWATAALLVTFCFGWVLIPAITFIILTVLKFIANIFHTSNQENRLKSVLRKIKEEFEKTKGSMVCDVCKYECETYKELKAHGVSCPQSQCPYCFTHCEPTEAAFQAHYKVCQVTHRFRDDLKKTVTPQNFTPGCYRTLNLFRYKSRCYIFTMWIFLLVLESILWAASASETPLTPVWNDNAHGVGSVPMHTDLELDFSLTSSSKYTYRRKLTNPLEEAQSIDLHIEIEEQTIGVDVHALGHWFDGRLNLKTSFHCYGACTKYEYPWHTAKCHYERDYQYETSWGCNPSDCPGVGTGCTACGLYLDQLKPVGSAYKIITIRYSRRVCVQFGEENLCKIIDMNDCFVSRHVKVCIIGTVSKFSQGDTLLFFGPLEGGGLIFKHWCTSTCQFGDPGDIMSPRDKGFLCPEFPGSFRKKCNFATTPICEYDGNMVSGYKKVMATIDSFQSFNTSTMHFTDERIEWKDPDGMLRDHINILVTKDIDFDNLGENPCKIGLQTSSIEGAWGSGVGFTLTCLVSLTECPTFLTSIKACDKAICYGAESVTLTRGQNTVKVSGKGGHSGSTFRCCHGEDCSQIGLHAAAPHLDKVNGISEIENSKVYDDGAPQCGIKCWFVKSGEWISGIFSGNWIVLIVLCVFLLFSLVLLSILCPVRKHKKS.

An N-terminal signal peptide occupies residues Met1–Thr18. Topologically, residues Leu19 to Ala485 are lumenal. Intrachain disulfides connect Cys29–Cys151, Cys63–Cys157, Cys109–Cys128, Cys133–Cys138, Cys175–Cys185, Cys210–Cys247, Cys234–Cys351, Cys376–Cys435, Cys380–Cys389, Cys405–Cys424, and Cys452–Cys475. Asn134 is a glycosylation site (N-linked (GlcNAc...) asparagine; by host). 2 N-linked (GlcNAc...) asparagine; by host glycosylation sites follow: Asn235 and Asn347. An N-linked (GlcNAc...) asparagine; by host glycan is attached at Asn399. A helical membrane pass occupies residues Ala486–Leu506. Residues Thr507 to Cys627 are Cytoplasmic-facing. The tract at residues Phe516–Lys533 is binding to the ribonucleoprotein. CCHC-type zinc fingers lie at residues Cys545 to Cys565 and Cys570 to Cys591. Binding to the ribonucleoprotein stretches follow at residues Tyr588 to Val605, Gln592 to Lys603, and Thr611 to Ser625. Residues Thr611–Ile634 form the ITAM domain. The YxxL motif lies at Tyr615–Leu618. The helical transmembrane segment at Tyr628 to Ala648 threads the bilayer. Over Ser649–Asn1105 the chain is Lumenal. 8 disulfides stabilise this stretch: Cys735–Cys770, Cys739–Cys777, Cys751–Cys885, Cys765–Cys896, Cys780–Cys904, Cys806–Cys815, Cys823–Cys832, and Cys863–Cys867. A fusion loop region spans residues Tyr757–Cys777. The N-linked (GlcNAc...) asparagine; by host glycan is linked to Asn928. 5 disulfide bridges follow: Cys970-Cys1000, Cys993-Cys1045, Cys1010-Cys1015, Cys1046-Cys1051, and Cys1085-Cys1089. The helical transmembrane segment at Trp1106 to Leu1126 threads the bilayer. The binding to the ribonucleoprotein stretch occupies residues Leu1122–Ser1135. The Cytoplasmic segment spans residues Cys1127 to Ser1135.

This sequence belongs to the hantavirus envelope glycoprotein family. As to quaternary structure, homodimer. Homotetramer; forms heterotetrameric Gn-Gc spikes in the pre-fusion conformation. Interacts (via C-terminus) with the nucleoprotein. Interacts with host TUFM; this interaction contributes to the virus-induced degradation of mitochondria by autophagy, which leads to degradation of host MAVS and inhibition of type I interferon (IFN) responses. Interacts with host MAP1LC3B; this interaction contributes to the virus-induced degradation of mitochondria by autophagy, which leads to degradation of host MAVS and inhibition of type I interferon (IFN) responses. In terms of assembly, homotetramer; forms heterotetrameric Gn-Gc spikes in the pre-fusion conformation. Homotrimer; forms homotrimer in the post-fusion conformation at acidic pH. Interacts (via C-terminus) with the nucleoprotein. Post-translationally, specific enzymatic cleavage in vivo yield the mature proteins Glycoprotein N and Glycoprotein C.

It is found in the virion membrane. The protein resides in the host cell surface. It localises to the host Golgi apparatus membrane. The protein localises to the host endoplasmic reticulum membrane. Its subcellular location is the host mitochondrion. In terms of biological role, forms homotetramers with glycoprotein C at the surface of the virion. Attaches the virion to host cell receptors including integrin ITGAV/ITGB3. This attachment induces virion internalization predominantly through clathrin-dependent endocytosis. May also bind to host C1QBP for virus entry into the host cell. Mediates the assembly and budding of infectious virus particles through its interaction with the nucleocapsid protein and the viral genome. May dysregulate normal immune and endothelial cell responses through an ITAM motif. Translocates to mitochondria, binds to host TUFM and recruits MAP1LC3B. These interactions induce mitochondrial autophagy and therefore destruction of host MAVS leading to inhibition of type I interferon (IFN) responses. Concomitant breakdown of glycoprotein N is apparently prevented by the nucleoprotein that may inhibit Gn-stimulated autophagosome-lysosome fusion. Interacts with the viral genomic RNA. Homodimer. Homotetramer; forms heterotetrameric Gn-Gc spikes in the pre-fusion conformation. Attaches the virion to host cell receptors including integrin ITGAV/ITGB3. This attachment induces virion internalization predominantly through clathrin-dependent endocytosis. May also bind to host C1QBP for virus entry into the host cell. Class II fusion protein that promotes fusion of viral membrane with host endosomal membrane after endocytosis of the virion. This Apodemus agrarius (Eurasian field mouse) protein is Envelopment polyprotein (GP).